The primary structure comprises 365 residues: UDP-N-acetylglucosamine--N-acetylmuramyl-(pentapeptide) pyrophosphoryl-undecaprenol N-acetylglucosamine transferase (365 aa).

Residues 12–14, Asn-128, Arg-169, Ser-195, and Gln-296 each bind UDP-N-acetyl-alpha-D-glucosamine; that span reads TGG.

It belongs to the glycosyltransferase 28 family. MurG subfamily.

The protein resides in the cell inner membrane. It carries out the reaction di-trans,octa-cis-undecaprenyl diphospho-N-acetyl-alpha-D-muramoyl-L-alanyl-D-glutamyl-meso-2,6-diaminopimeloyl-D-alanyl-D-alanine + UDP-N-acetyl-alpha-D-glucosamine = di-trans,octa-cis-undecaprenyl diphospho-[N-acetyl-alpha-D-glucosaminyl-(1-&gt;4)]-N-acetyl-alpha-D-muramoyl-L-alanyl-D-glutamyl-meso-2,6-diaminopimeloyl-D-alanyl-D-alanine + UDP + H(+). It functions in the pathway cell wall biogenesis; peptidoglycan biosynthesis. In terms of biological role, cell wall formation. Catalyzes the transfer of a GlcNAc subunit on undecaprenyl-pyrophosphoryl-MurNAc-pentapeptide (lipid intermediate I) to form undecaprenyl-pyrophosphoryl-MurNAc-(pentapeptide)GlcNAc (lipid intermediate II). The protein is UDP-N-acetylglucosamine--N-acetylmuramyl-(pentapeptide) pyrophosphoryl-undecaprenol N-acetylglucosamine transferase of Gluconobacter oxydans (strain 621H) (Gluconobacter suboxydans).